The following is a 1068-amino-acid chain: Target of Nesh-SH3 (1068 aa).

An N-terminal signal peptide occupies residues 1–21 (MLSSLGCLLLCGSITLALGNA). An N-linked (GlcNAc...) asparagine glycan is attached at asparagine 37. The Fibronectin type-III 1 domain maps to 116–214 (KPLQLVVGTL…KIFNHKTVVG (99 aa)). Disordered regions lie at residues 315 to 351 (SKTPEVEKISARPTTVTPETVPRSTKPTTSSALDVSE) and 384 to 811 (VFSS…SITD). The segment covering 326–339 (RPTTVTPETVPRST) has biased composition (low complexity). Polar residues predominate over residues 340–351 (KPTTSSALDVSE). Residues 447 to 462 (QPTTPAPQQTTSIPST) show a composition bias toward low complexity. Positions 463–473 (PKRRPRPKPPR) are enriched in basic residues. Positions 482–499 (AGTITPKISKSPEPTWTT) are enriched in polar residues. Pro residues predominate over residues 532 to 544 (RAPPKPKTSPRPR). Residues 562-574 (PKTSPSPEVSYTT) are compositionally biased toward polar residues. Composition is skewed to low complexity over residues 603–631 (IPFIPMISPSPSQEELQTTLEETDQSTQE) and 737–750 (PPLRSTPRPTGTPL). Polar residues predominate over residues 802-811 (PDNSPCSITD). The Fibronectin type-III 2 domain maps to 833-926 (PPTNLTVVTV…NTVAFSTESA (94 aa)).

In terms of assembly, probably interacts with ABI3. Expressed in brain, heart, lung, liver, pancreas kidney and placenta.

The protein localises to the secreted. This is Target of Nesh-SH3 from Homo sapiens (Human).